The primary structure comprises 458 residues: tRNA modification GTPase MnmE (458 aa).

(6S)-5-formyl-5,6,7,8-tetrahydrofolate-binding residues include Arg32, Glu89, and Lys128. Positions 224-381 constitute a TrmE-type G domain; it reads GVRVVLAGRP…LCQRLKECAG (158 aa). Position 234 (Asn234) interacts with K(+). GTP-binding positions include 234-239, 253-259, and 278-281; these read NVGKSS, TDVPGTT, and DTAG. Ser238 provides a ligand contact to Mg(2+). K(+) contacts are provided by Thr253, Val255, and Thr258. Residue Thr259 participates in Mg(2+) binding. Lys458 contributes to the (6S)-5-formyl-5,6,7,8-tetrahydrofolate binding site.

The protein belongs to the TRAFAC class TrmE-Era-EngA-EngB-Septin-like GTPase superfamily. TrmE GTPase family. In terms of assembly, homodimer. Heterotetramer of two MnmE and two MnmG subunits. K(+) serves as cofactor.

Its subcellular location is the cytoplasm. Exhibits a very high intrinsic GTPase hydrolysis rate. Involved in the addition of a carboxymethylaminomethyl (cmnm) group at the wobble position (U34) of certain tRNAs, forming tRNA-cmnm(5)s(2)U34. In Nitrosococcus oceani (strain ATCC 19707 / BCRC 17464 / JCM 30415 / NCIMB 11848 / C-107), this protein is tRNA modification GTPase MnmE.